A 397-amino-acid polypeptide reads, in one-letter code: Elongation factor Tu (397 aa).

One can recognise a tr-type G domain in the interval 10-206 (KPHCNIGTIG…AVDTWIPDPQ (197 aa)). The segment at 19 to 26 (GHVDHGKT) is G1. 19–26 (GHVDHGKT) lines the GTP pocket. Residue threonine 26 coordinates Mg(2+). Positions 61–65 (GITIS) are G2. The G3 stretch occupies residues 82–85 (DCPG). GTP contacts are provided by residues 82 to 86 (DCPGH) and 137 to 140 (NKCD). Residues 137–140 (NKCD) are G4. Positions 175 to 177 (SAL) are G5.

The protein belongs to the TRAFAC class translation factor GTPase superfamily. Classic translation factor GTPase family. EF-Tu/EF-1A subfamily. As to quaternary structure, monomer.

The protein localises to the cytoplasm. The enzyme catalyses GTP + H2O = GDP + phosphate + H(+). In terms of biological role, GTP hydrolase that promotes the GTP-dependent binding of aminoacyl-tRNA to the A-site of ribosomes during protein biosynthesis. The polypeptide is Elongation factor Tu (Lachnoclostridium phytofermentans (strain ATCC 700394 / DSM 18823 / ISDg) (Clostridium phytofermentans)).